The sequence spans 436 residues: Hydrolyase ccsE (436 aa).

Ser249 functions as the Nucleophile in the catalytic mechanism.

The protein belongs to the AB hydrolase superfamily. FUS2 hydrolase family. As to quaternary structure, homodimer.

Its pathway is mycotoxin biosynthesis. Hydrolyase; part of the gene cluster that mediates the biosynthesis of a family of the mycotoxins cytochalasins E and K. The hybrid PKS-NRPS synthetase ccsA and the enoyl reductase ccsC are responsible for fusion of phenylalanine with an octaketide backbone and subsequent release of the stable tetramic acid precursor. The polyketide synthase module (PKS) of the PKS-NRPS ccsA is responsible for the synthesis of the octaketide backbone. The downstream nonribosomal peptide synthetase (NRPS) amidates the carboxyl end of the octaketide with a phenylalanine. A reductase-like domain (R) at the C-terminus catalyzes the reductive release of the polyketide-amino acid intermediate. Because ccsA lacks a designated enoylreductase (ER) domain, the required activity is provided the enoyl reductase ccsC. Upon formation of the 11-membered carbocycle-fused perhydroisoindolone intermediate, a number of oxidative steps are required to afford the final cytochalasin E and K, including two hydroxylations at C17 and C18, one alcohol oxidation at C17, one epoxidation at C6 and C7 and two Baeyer-Villiger oxidations. The oxidative modification at C17, C18 and the C6-C7 epoxidation are likely to be catalyzed by the two cytochrome P450 oxygenases ccsD and ccsG. CcsD may be responsible for the epoxidation of the C6-C7 double bond. CcsG may be responsible for the successive oxidative modifications at C17 and C18. The double Baeyer-Villiger oxidations of ketocytochalasin to precytochalasin and cytochalasin Z(16) are among the final steps leading to cytochalasin E and K and are catalyzed by ccsB. The first oxygen insertion step follows that of the classic BVMO mechanism, generating the ester precytochalasin. Release of precytochalasin into an aqueous environment can generate the shunt product iso-precytochalasin through spontaneous isomerization. Alternatively, precytochalasin can undergo further oxidation by ccsB to yield the in-line carbonate-containing cytochalasin Z(16). Cytochalasin Z(16) is a precursor to cytochalasin E and cytochalasin K, whereas iso-precytochalasin is a precursor to cytochalasin Z(17) and rosellichalasin. The hydrolyase ccsE may catalyze hydrolysis of epoxide bond in cytochalasin E to afford cytochalasin K. The function of ccsF has not been assigned but it may play a role in post-PKS-NRPS biosynthetic step, resistance or transport of cytochalasins and related PKS-NRPS products. The polypeptide is Hydrolyase ccsE (Aspergillus clavatus (strain ATCC 1007 / CBS 513.65 / DSM 816 / NCTC 3887 / NRRL 1 / QM 1276 / 107)).